We begin with the raw amino-acid sequence, 135 residues long: Large ribosomal subunit protein uL16 (135 aa).

The protein belongs to the universal ribosomal protein uL16 family. As to quaternary structure, part of the 50S ribosomal subunit.

Binds 23S rRNA and is also seen to make contacts with the A and possibly P site tRNAs. The protein is Large ribosomal subunit protein uL16 of Bdellovibrio bacteriovorus (strain ATCC 15356 / DSM 50701 / NCIMB 9529 / HD100).